We begin with the raw amino-acid sequence, 312 residues long: Olfactory receptor 6Z7 (312 aa).

At 1–29 (MERSLALANMTRVQQFILLGLSTRLDIRD) the chain is on the extracellular side. An N-linked (GlcNAc...) asparagine glycan is attached at Asn-9. The chain crosses the membrane as a helical span at residues 30–50 (ALFAVFLTLYLLTLLENTLII). The Cytoplasmic segment spans residues 51–69 (YLICSHKELHKPMYFFLGN). The helical transmembrane segment at 70 to 90 (LSCLEMCYVSVTMPTLLMGLW) threads the bilayer. Asn-91 is a topological domain (extracellular). Residues 92-112 (GLYHIPFIACMTQLFFFIVLV) form a helical membrane-spanning segment. A disulfide bridge links Cys-101 with Cys-193. At 113 to 141 (GTECILLASMAYDRYVAICRPLHYPVLMR) the chain is on the cytoplasmic side. A helical membrane pass occupies residues 142–162 (PQVCLGLAMISWLGGLLVSMI). Residues 163–195 (KTTCIATLSYCGPNVLNHFFCDVSPLLNLSCTH) lie on the Extracellular side of the membrane. Asn-190 is a glycosylation site (N-linked (GlcNAc...) asparagine). The helical transmembrane segment at 196 to 216 (VALTELVDFISAIVILWGCFL) threads the bilayer. The Cytoplasmic segment spans residues 217-241 (TTMASYVAIGRAVLRMPSTTARYKA). Residues 242–262 (FSTCASHLVVVGIFYSVTIFI) form a helical membrane-spanning segment. At 263–275 (YARPKRIEAMDLN) the chain is on the extracellular side. The helical transmembrane segment at 276–296 (KVLSVIYTVVTPMCNPVIYCL) threads the bilayer. The Cytoplasmic portion of the chain corresponds to 297–312 (RNKEVQVALHRTMHWS).

Belongs to the G-protein coupled receptor 1 family.

The protein resides in the cell membrane. Its function is as follows. Odorant receptor. In Mus musculus (Mouse), this protein is Olfactory receptor 6Z7.